A 122-amino-acid polypeptide reads, in one-letter code: Glycine cleavage system H protein (122 aa).

The 82-residue stretch at 22–103 folds into the Lipoyl-binding domain; sequence IGIIGISDYA…AFGSWFFKVE (82 aa). An N6-lipoyllysine modification is found at Lys-63.

Belongs to the GcvH family. The glycine cleavage system is composed of four proteins: P, T, L and H. It depends on (R)-lipoate as a cofactor.

The glycine cleavage system catalyzes the degradation of glycine. The H protein shuttles the methylamine group of glycine from the P protein to the T protein. The polypeptide is Glycine cleavage system H protein (Treponema denticola (strain ATCC 35405 / DSM 14222 / CIP 103919 / JCM 8153 / KCTC 15104)).